A 158-amino-acid polypeptide reads, in one-letter code: NAD(P)H-quinone oxidoreductase subunit J, chloroplastic (158 aa).

It belongs to the complex I 30 kDa subunit family. As to quaternary structure, NDH is composed of at least 16 different subunits, 5 of which are encoded in the nucleus.

The protein resides in the plastid. Its subcellular location is the chloroplast thylakoid membrane. It carries out the reaction a plastoquinone + NADH + (n+1) H(+)(in) = a plastoquinol + NAD(+) + n H(+)(out). The enzyme catalyses a plastoquinone + NADPH + (n+1) H(+)(in) = a plastoquinol + NADP(+) + n H(+)(out). Its function is as follows. NDH shuttles electrons from NAD(P)H:plastoquinone, via FMN and iron-sulfur (Fe-S) centers, to quinones in the photosynthetic chain and possibly in a chloroplast respiratory chain. The immediate electron acceptor for the enzyme in this species is believed to be plastoquinone. Couples the redox reaction to proton translocation, and thus conserves the redox energy in a proton gradient. This is NAD(P)H-quinone oxidoreductase subunit J, chloroplastic from Arabis hirsuta (Hairy rock-cress).